A 311-amino-acid polypeptide reads, in one-letter code: Tyrosine recombinase XerD (311 aa).

The region spanning 1-83 (MEFIAQFLEM…TIKSYYAFLI (83 aa)) is the Core-binding (CB) domain. In terms of domain architecture, Tyr recombinase spans 104-299 (KLPIILSIDQ…HTNHLKKALL (196 aa)). Active-site residues include Arg-145, Lys-176, His-251, Arg-254, and His-277. Tyr-286 functions as the O-(3'-phospho-DNA)-tyrosine intermediate in the catalytic mechanism.

The protein belongs to the 'phage' integrase family. XerD subfamily. As to quaternary structure, forms a cyclic heterotetrameric complex composed of two molecules of XerC and two molecules of XerD.

The protein resides in the cytoplasm. In terms of biological role, site-specific tyrosine recombinase, which acts by catalyzing the cutting and rejoining of the recombining DNA molecules. The XerC-XerD complex is essential to convert dimers of the bacterial chromosome into monomers to permit their segregation at cell division. It also contributes to the segregational stability of plasmids. In Rickettsia prowazekii (strain Madrid E), this protein is Tyrosine recombinase XerD.